Here is a 341-residue protein sequence, read N- to C-terminus: Anthranilate phosphoribosyltransferase (341 aa).

5-phospho-alpha-D-ribose 1-diphosphate-binding positions include glycine 81, 84-85 (GD), threonine 89, 91-94 (NIST), 109-117 (KHGNRKASS), and threonine 121. An anthranilate-binding site is contributed by glycine 81. Serine 93 lines the Mg(2+) pocket. Residue asparagine 112 coordinates anthranilate. Arginine 167 provides a ligand contact to anthranilate. Mg(2+) contacts are provided by aspartate 226 and glutamate 227.

The protein belongs to the anthranilate phosphoribosyltransferase family. As to quaternary structure, homodimer. It depends on Mg(2+) as a cofactor.

The enzyme catalyses N-(5-phospho-beta-D-ribosyl)anthranilate + diphosphate = 5-phospho-alpha-D-ribose 1-diphosphate + anthranilate. It functions in the pathway amino-acid biosynthesis; L-tryptophan biosynthesis; L-tryptophan from chorismate: step 2/5. Catalyzes the transfer of the phosphoribosyl group of 5-phosphorylribose-1-pyrophosphate (PRPP) to anthranilate to yield N-(5'-phosphoribosyl)-anthranilate (PRA). This chain is Anthranilate phosphoribosyltransferase, found in Parvibaculum lavamentivorans (strain DS-1 / DSM 13023 / NCIMB 13966).